The following is an 829-amino-acid chain: Translation initiation factor IF-2 (829 aa).

The span at 128 to 137 (QNAEEEKVEA) shows a compositional bias: basic and acidic residues. The tract at residues 128–157 (QNAEEEKVEASAKTVQNNEDIQPQTSKKKE) is disordered. Residues 140 to 152 (KTVQNNEDIQPQT) show a composition bias toward polar residues. The region spanning 327 to 497 (TRAPVVTVMG…LLIAEMQDLK (171 aa)) is the tr-type G domain. A G1 region spans residues 336–343 (GHVDHGKT). 336 to 343 (GHVDHGKT) contacts GTP. Positions 361 to 365 (GITQH) are G2. Residues 383–386 (DTPG) form a G3 region. Residues 383–387 (DTPGH) and 437–440 (NKID) each bind GTP. Residues 437-440 (NKID) are G4. Positions 473-475 (SAL) are G5.

It belongs to the TRAFAC class translation factor GTPase superfamily. Classic translation factor GTPase family. IF-2 subfamily.

The protein resides in the cytoplasm. One of the essential components for the initiation of protein synthesis. Protects formylmethionyl-tRNA from spontaneous hydrolysis and promotes its binding to the 30S ribosomal subunits. Also involved in the hydrolysis of GTP during the formation of the 70S ribosomal complex. The sequence is that of Translation initiation factor IF-2 from Rickettsia felis (strain ATCC VR-1525 / URRWXCal2) (Rickettsia azadi).